The chain runs to 215 residues: Thymidylate kinase (215 aa).

7 to 14 is an ATP binding site; it reads GLDGSGKT.

This sequence belongs to the thymidylate kinase family.

The enzyme catalyses dTMP + ATP = dTDP + ADP. Phosphorylation of dTMP to form dTDP in both de novo and salvage pathways of dTTP synthesis. This Mycoplasmopsis agalactiae (strain NCTC 10123 / CIP 59.7 / PG2) (Mycoplasma agalactiae) protein is Thymidylate kinase.